Consider the following 69-residue polypeptide: uncharacterized protein (69 aa).

2 helical membrane-spanning segments follow: residues 7–29 and 44–66; these read LLSGLGLFLGVLAGLAGLILGSI and ALQVLNFLLLFISTIAGGFLGLL.

The protein localises to the cell membrane. This is an uncharacterized protein from Archaeoglobus fulgidus (strain ATCC 49558 / DSM 4304 / JCM 9628 / NBRC 100126 / VC-16).